Here is a 519-residue protein sequence, read N- to C-terminus: Sensor protein RprX (519 aa).

2 helical membrane passes run 5 to 25 and 260 to 280; these read TIWI…YLQV and IPSM…IYIV. The 222-residue stretch at 296 to 517 folds into the Histidine kinase domain; it reads NMTHEFKTPI…KFIIALPLLK (222 aa). His299 is modified (phosphohistidine; by autocatalysis).

The protein resides in the cell membrane. It carries out the reaction ATP + protein L-histidine = ADP + protein N-phospho-L-histidine.. Its function is as follows. Member of the two-component regulatory system RprX/RprY. May activate RprY by phosphorylation. This is Sensor protein RprX (rprX) from Bacteroides fragilis (strain YCH46).